A 177-amino-acid polypeptide reads, in one-letter code: Non-specific lipid transfer protein GPI-anchored 22 (177 aa).

An N-terminal signal peptide occupies residues 1–29 (MARFMAYNQNPQMLALCITVAVMFLGVRS). 4 disulfides stabilise this stretch: C38/C81, C48/C63, C64/C108, and C79/C117. The N-linked (GlcNAc...) asparagine glycan is linked to N113. S152 carries GPI-anchor amidated serine lipidation. A propeptide spans 153–177 (SSIKGRDNKQFGLMMAGALSIWYIM) (removed in mature form).

This sequence belongs to the plant LTP family. In terms of tissue distribution, expressed in seedlings, preferentially in hypocotyls and roots. Also observed in siliques.

It localises to the cell membrane. Its function is as follows. Probable lipid transfer protein. In Arabidopsis thaliana (Mouse-ear cress), this protein is Non-specific lipid transfer protein GPI-anchored 22.